The chain runs to 425 residues: Serine--tRNA ligase (425 aa).

233–235 provides a ligand contact to L-serine; the sequence is TAE. Residue 264–266 coordinates ATP; the sequence is RRE. Glu-287 contacts L-serine. 351 to 354 is an ATP binding site; that stretch reads EISS. Ser-385 contacts L-serine.

This sequence belongs to the class-II aminoacyl-tRNA synthetase family. Type-1 seryl-tRNA synthetase subfamily. Homodimer. The tRNA molecule binds across the dimer.

The protein localises to the cytoplasm. It carries out the reaction tRNA(Ser) + L-serine + ATP = L-seryl-tRNA(Ser) + AMP + diphosphate + H(+). The enzyme catalyses tRNA(Sec) + L-serine + ATP = L-seryl-tRNA(Sec) + AMP + diphosphate + H(+). The protein operates within aminoacyl-tRNA biosynthesis; selenocysteinyl-tRNA(Sec) biosynthesis; L-seryl-tRNA(Sec) from L-serine and tRNA(Sec): step 1/1. Functionally, catalyzes the attachment of serine to tRNA(Ser). Is also able to aminoacylate tRNA(Sec) with serine, to form the misacylated tRNA L-seryl-tRNA(Sec), which will be further converted into selenocysteinyl-tRNA(Sec). This chain is Serine--tRNA ligase, found in Synechococcus sp. (strain CC9605).